The sequence spans 147 residues: Phosphoribosyl-AMP cyclohydrolase (147 aa).

D89 is a binding site for Mg(2+). Zn(2+) is bound at residue C90. Positions 91 and 93 each coordinate Mg(2+). 2 residues coordinate Zn(2+): C106 and C113.

The protein belongs to the PRA-CH family. As to quaternary structure, homodimer. Mg(2+) serves as cofactor. Requires Zn(2+) as cofactor.

The protein localises to the cytoplasm. It carries out the reaction 1-(5-phospho-beta-D-ribosyl)-5'-AMP + H2O = 1-(5-phospho-beta-D-ribosyl)-5-[(5-phospho-beta-D-ribosylamino)methylideneamino]imidazole-4-carboxamide. The protein operates within amino-acid biosynthesis; L-histidine biosynthesis; L-histidine from 5-phospho-alpha-D-ribose 1-diphosphate: step 3/9. Its function is as follows. Catalyzes the hydrolysis of the adenine ring of phosphoribosyl-AMP. This is Phosphoribosyl-AMP cyclohydrolase from Nitrobacter hamburgensis (strain DSM 10229 / NCIMB 13809 / X14).